The chain runs to 403 residues: Tryptophan synthase beta chain (403 aa).

Lys-93 carries the post-translational modification N6-(pyridoxal phosphate)lysine.

It belongs to the TrpB family. Tetramer of two alpha and two beta chains. Pyridoxal 5'-phosphate is required as a cofactor.

The catalysed reaction is (1S,2R)-1-C-(indol-3-yl)glycerol 3-phosphate + L-serine = D-glyceraldehyde 3-phosphate + L-tryptophan + H2O. It functions in the pathway amino-acid biosynthesis; L-tryptophan biosynthesis; L-tryptophan from chorismate: step 5/5. Its function is as follows. The beta subunit is responsible for the synthesis of L-tryptophan from indole and L-serine. The sequence is that of Tryptophan synthase beta chain from Acinetobacter baylyi (strain ATCC 33305 / BD413 / ADP1).